A 343-amino-acid polypeptide reads, in one-letter code: MTKTMLRALRGETLPTPPIWLMRQAGRYLPEYRATRAEAGDFLSLCYNPELAAEVTLQPIRRYGFDAAILFADILLLPQALGADLWFETGEGPRMSTITDMAGVEALKGKDEIHEKLAPVYETCRILARELPKETTFIGFAGMPWTVATYMIAGRGSKDQAAAHKLKDTDRPAFEALMDRITEATIEYLSKQVEAGCEVVKLFDSWAGSLKGQDFEDFAVAPAKKIIAELKARHPGLPIIAFPREAGEGYIGFAEKTGADCVAIDNSVSPEWAAENVQKGKSCVQGNLDPKYMITGGDELVQATKRVVEAFRNGPHIFNLGHGITPEADPENVTLLIETIRGK.

Substrate contacts are provided by residues 23-27, Asp73, Tyr150, Ser205, and His322; that span reads RQAGR.

This sequence belongs to the uroporphyrinogen decarboxylase family. Homodimer.

Its subcellular location is the cytoplasm. The enzyme catalyses uroporphyrinogen III + 4 H(+) = coproporphyrinogen III + 4 CO2. It participates in porphyrin-containing compound metabolism; protoporphyrin-IX biosynthesis; coproporphyrinogen-III from 5-aminolevulinate: step 4/4. Its function is as follows. Catalyzes the decarboxylation of four acetate groups of uroporphyrinogen-III to yield coproporphyrinogen-III. This Cereibacter sphaeroides (strain ATCC 17025 / ATH 2.4.3) (Rhodobacter sphaeroides) protein is Uroporphyrinogen decarboxylase.